A 217-amino-acid chain; its full sequence is T-complex protein 10A homolog 1 (217 aa).

Residues Met-1–Ala-26 are disordered. Basic and acidic residues predominate over residues Glu-7–Asp-19. Residues Ala-69–Ser-110 are a coiled coil. The segment at Leu-75–Leu-96 is leucine-zipper. The span at Glu-175 to Leu-192 shows a compositional bias: basic and acidic residues. The segment at Glu-175 to Val-217 is disordered.

It belongs to the TCP10 family. As to quaternary structure, self-associates (via leucine zipper). Interacts (via leucine zipper) with ZIPK/DAPK3 (via leucine zipper). Interacts with MAD4.

It localises to the nucleus. Its function is as follows. May be involved in transcriptional regulation. Has in vitro transcription inhibition activity. This is T-complex protein 10A homolog 1 (TCP10L) from Pan troglodytes (Chimpanzee).